A 947-amino-acid chain; its full sequence is Testis-expressed protein 11 (947 aa).

This sequence belongs to the SPO22 family. Interacts with SYCP2. Interacts with PBXIP1; may prevent interaction between PBXIP1 and ESR2. Interacts with SHOC1. Interacts with REDIC1. In terms of tissue distribution, testis-specific.

It is found in the chromosome. Functionally, regulator of crossing-over during meiosis. Involved in initiation and/or maintenance of chromosome synapsis and formation of crossovers. The chain is Testis-expressed protein 11 (Tex11) from Mus musculus (Mouse).